The sequence spans 508 residues: Lysine-specific permease LysP (508 aa).

Transmembrane regions (helical) follow at residues 43–63, 66–86, 112–132, 144–164, 184–204, 219–239, 270–290, 314–334, 367–387, 393–413, 436–456, and 467–487; these read SMIA…GDVI, AGPF…YFLM, PAFG…TVAV, WLPD…VFSI, ITVV…IMGG, FVGG…LLVA, IFWR…AIIP, VGFS…VVSA, IPFI…LTSI, FTLL…GIAI, AKLF…VTLG, and WVQG…YLGY.

This sequence belongs to the amino acid-polyamine-organocation (APC) superfamily. Amino acid transporter (AAT) (TC 2.A.3.1) family.

The protein localises to the cell membrane. It catalyses the reaction L-lysine(out) + H(+)(out) = L-lysine(in) + H(+)(in). Permease involved in lysine uptake. This is Lysine-specific permease LysP from Lactococcus lactis subsp. cremoris (strain MG1363).